We begin with the raw amino-acid sequence, 1169 residues long: Transcription-repair-coupling factor (1169 aa).

Residues 634-795 (DMERARPMDR…MLGVRDLSVI (162 aa)) enclose the Helicase ATP-binding domain. Position 647–654 (647–654 (GDVGYGKT)) interacts with ATP. Positions 748 to 751 (DEEQ) match the DEEQ box motif. Residues 809 to 970 (VLEQNTNFIK…GFKIAMRDLN (162 aa)) enclose the Helicase C-terminal domain.

The protein in the N-terminal section; belongs to the UvrB family. This sequence in the C-terminal section; belongs to the helicase family. RecG subfamily.

The protein localises to the cytoplasm. Its function is as follows. Couples transcription and DNA repair by recognizing RNA polymerase (RNAP) stalled at DNA lesions. Mediates ATP-dependent release of RNAP and its truncated transcript from the DNA, and recruitment of nucleotide excision repair machinery to the damaged site. This chain is Transcription-repair-coupling factor, found in Staphylococcus epidermidis (strain ATCC 12228 / FDA PCI 1200).